The following is a 123-amino-acid chain: Holo-[acyl-carrier-protein] synthase (123 aa).

Mg(2+) contacts are provided by D8 and E56.

This sequence belongs to the P-Pant transferase superfamily. AcpS family. Requires Mg(2+) as cofactor.

It localises to the cytoplasm. It catalyses the reaction apo-[ACP] + CoA = holo-[ACP] + adenosine 3',5'-bisphosphate + H(+). Functionally, transfers the 4'-phosphopantetheine moiety from coenzyme A to a Ser of acyl-carrier-protein. The chain is Holo-[acyl-carrier-protein] synthase from Treponema denticola (strain ATCC 35405 / DSM 14222 / CIP 103919 / JCM 8153 / KCTC 15104).